A 282-amino-acid chain; its full sequence is Putative 4-diphosphocytidyl-2-C-methyl-D-erythritol kinase (282 aa).

Residue Lys-9 is part of the active site. 93-103 (PVSAGLAGGSA) serves as a coordination point for ATP. Asp-135 is an active-site residue.

The protein belongs to the GHMP kinase family. IspE subfamily.

It catalyses the reaction 4-CDP-2-C-methyl-D-erythritol + ATP = 4-CDP-2-C-methyl-D-erythritol 2-phosphate + ADP + H(+). Functionally, catalyzes the phosphorylation of the position 2 hydroxy group of 4-diphosphocytidyl-2C-methyl-D-erythritol. The protein is Putative 4-diphosphocytidyl-2-C-methyl-D-erythritol kinase of Staphylococcus aureus (strain bovine RF122 / ET3-1).